We begin with the raw amino-acid sequence, 295 residues long: N-acetylmuramic acid 6-phosphate etherase (295 aa).

One can recognise an SIS domain in the interval Thr-53–Lys-216. Glu-81 (proton donor) is an active-site residue. The active site involves Glu-112.

This sequence belongs to the GCKR-like family. MurNAc-6-P etherase subfamily. Homodimer.

It carries out the reaction N-acetyl-D-muramate 6-phosphate + H2O = N-acetyl-D-glucosamine 6-phosphate + (R)-lactate. Its pathway is amino-sugar metabolism; N-acetylmuramate degradation. In terms of biological role, specifically catalyzes the cleavage of the D-lactyl ether substituent of MurNAc 6-phosphate, producing GlcNAc 6-phosphate and D-lactate. In Staphylococcus saprophyticus subsp. saprophyticus (strain ATCC 15305 / DSM 20229 / NCIMB 8711 / NCTC 7292 / S-41), this protein is N-acetylmuramic acid 6-phosphate etherase.